The chain runs to 408 residues: G2/mitotic-specific cyclin-B (408 aa).

This sequence belongs to the cyclin family. Cyclin AB subfamily. As to quaternary structure, interacts with the CDC2 protein kinase to form a serine/threonine kinase holoenzyme complex also known as maturation promoting factor (MPF). The cyclin subunit imparts substrate specificity to the complex.

Functionally, essential for the control of the cell cycle at the G2/M (mitosis) transition. The protein is G2/mitotic-specific cyclin-B of Patella vulgata (Common limpet).